We begin with the raw amino-acid sequence, 331 residues long: MGRGYNLLFVLVTFLVLVAAVTAQGNRGSNSGGGRRPHVGFYGNRCRNVESIVRSVVQSHVRSIPANAPGILRMHFHDCFVHGCDGSVLLAGNTSERTAVPNRSLRGFEVIEEAKARLEKACPRTVSCADILTLAARDAVVLTGGQRWEVPLGRLDGRISQASDVNLPGPSDSVAKQKQDFAAKTLNTLDLVTLVGGHTIGTAGCGLVRGRFVNFNGTGQPDPSIDPSFVPLILAQCPQNGGTRVELDEGSVDKFDTSFLRKVTSSRVVLQSDLVLWKDPETRAIIERLLGLRRPSLRFGTEFGKSMVKMSLIEVKTGSDGEIRRVCSAIN.

The signal sequence occupies residues 1–23 (MGRGYNLLFVLVTFLVLVAAVTA). 4 disulfides stabilise this stretch: Cys46–Cys122, Cys79–Cys84, Cys128–Cys327, and Cys205–Cys237. His77 serves as the catalytic Proton acceptor. 5 residues coordinate Ca(2+): Asp78, Val81, Gly83, Asp85, and Ser87. An N-linked (GlcNAc...) asparagine glycan is attached at Asn93. Position 168 (Pro168) interacts with substrate. His198 is a binding site for heme b. Thr199 serves as a coordination point for Ca(2+). Asn216 carries an N-linked (GlcNAc...) asparagine glycan. 3 residues coordinate Ca(2+): Asp248, Ser251, and Asp256.

This sequence belongs to the peroxidase family. Classical plant (class III) peroxidase subfamily. The cofactor is heme b. Requires Ca(2+) as cofactor. Mainly expressed in roots and slightly in leaves.

It is found in the secreted. The enzyme catalyses 2 a phenolic donor + H2O2 = 2 a phenolic radical donor + 2 H2O. Its function is as follows. Removal of H(2)O(2), oxidation of toxic reductants, biosynthesis and degradation of lignin, suberization, auxin catabolism, response to environmental stresses such as wounding, pathogen attack and oxidative stress. These functions might be dependent on each isozyme/isoform in each plant tissue. The protein is Peroxidase 69 (PER69) of Arabidopsis thaliana (Mouse-ear cress).